The primary structure comprises 455 residues: Cysteinylglycine-S-conjugate dipeptidase (455 aa).

Residue His-92 coordinates Zn(2+). Residue Asp-94 is part of the active site. Asp-125 is a Zn(2+) binding site. The Proton acceptor role is filled by Glu-158. Residues Glu-159, Glu-163, and His-428 each contribute to the Zn(2+) site.

The protein belongs to the peptidase M20F family. It depends on Zn(2+) as a cofactor.

The catalysed reaction is an S-substituted L-cysteinylglycine + H2O = an S-substituted L-cysteine + glycine. It catalyses the reaction S-(1-hydroxy-3-methylhexan-3-yl)-L-cysteinylglycine + H2O = S-(1-hydroxy-3-methylhexan-3-yl)-L-cysteine + glycine. It carries out the reaction S-benzyl-L-cysteinylglycine + H2O = S-benzyl-L-cysteine + glycine. Metallopeptidase that hydrolyzes the Cys-Gly bond of Cys-Gly-S-conjugates. Involved in the formation of the human body odorant 3-methyl-3-sulfanylhexan-1-ol (3M3SH) from odorless axilla secretions. Catalyzes the hydrolysis of the Cys-Gly bond of the Cys-Gly-S-conjugate of 3M3SH, a key precursor secreted by apocrine glands in human axilla skin. The Cys-S-conjugate obtained is then cleaved by the Cys-S-conjugate beta-lyase MetC, which finally releases 3M3SH. This chain is Cysteinylglycine-S-conjugate dipeptidase, found in Corynebacterium striatum.